Consider the following 208-residue polypeptide: Small ribosomal subunit protein uS4 (208 aa).

The S4 RNA-binding domain maps to 98 to 158; that stretch reads RRLDNVVYRL…EKSRKIACIN (61 aa).

It belongs to the universal ribosomal protein uS4 family. As to quaternary structure, part of the 30S ribosomal subunit. Contacts protein S5. The interaction surface between S4 and S5 is involved in control of translational fidelity.

One of the primary rRNA binding proteins, it binds directly to 16S rRNA where it nucleates assembly of the body of the 30S subunit. Its function is as follows. With S5 and S12 plays an important role in translational accuracy. The protein is Small ribosomal subunit protein uS4 of Geobacter sulfurreducens (strain ATCC 51573 / DSM 12127 / PCA).